We begin with the raw amino-acid sequence, 210 residues long: Redox-sensing transcriptional repressor Rex (210 aa).

The H-T-H motif DNA-binding region spans 17 to 56; sequence KYHRYLGDLLDRDIQRISSKELSDIIGFTASQIRQDLNNF. 91-96 contributes to the NAD(+) binding site; it reads GAGNLG.

This sequence belongs to the transcriptional regulatory Rex family. In terms of assembly, homodimer.

Its subcellular location is the cytoplasm. Its function is as follows. Modulates transcription in response to changes in cellular NADH/NAD(+) redox state. This Clostridioides difficile (strain 630) (Peptoclostridium difficile) protein is Redox-sensing transcriptional repressor Rex.